Reading from the N-terminus, the 403-residue chain is L-cysteine:1D-myo-inositol 2-amino-2-deoxy-alpha-D-glucopyranoside ligase (403 aa).

C43 contributes to the Zn(2+) binding site. Residues 43–46 (CGIT), T58, 81–83 (NVT), and W223 each bind L-cysteinyl-5'-AMP. The 'HIGH' region signature appears at 45–55 (ITPYDATHLGH). C227 contributes to the Zn(2+) binding site. Residue 245–247 (GAD) participates in L-cysteinyl-5'-AMP binding. Position 252 (H252) interacts with Zn(2+). Residue V278 participates in L-cysteinyl-5'-AMP binding. A 'KMSKS' region motif is present at residues 284-288 (KMSKS).

The protein belongs to the class-I aminoacyl-tRNA synthetase family. MshC subfamily. Monomer. Zn(2+) serves as cofactor.

It carries out the reaction 1D-myo-inositol 2-amino-2-deoxy-alpha-D-glucopyranoside + L-cysteine + ATP = 1D-myo-inositol 2-(L-cysteinylamino)-2-deoxy-alpha-D-glucopyranoside + AMP + diphosphate + H(+). Catalyzes the ATP-dependent condensation of GlcN-Ins and L-cysteine to form L-Cys-GlcN-Ins. The protein is L-cysteine:1D-myo-inositol 2-amino-2-deoxy-alpha-D-glucopyranoside ligase of Acidothermus cellulolyticus (strain ATCC 43068 / DSM 8971 / 11B).